Here is a 412-residue protein sequence, read N- to C-terminus: Gamma-glutamyl phosphate reductase (412 aa).

The protein belongs to the gamma-glutamyl phosphate reductase family.

The protein resides in the cytoplasm. The enzyme catalyses L-glutamate 5-semialdehyde + phosphate + NADP(+) = L-glutamyl 5-phosphate + NADPH + H(+). It participates in amino-acid biosynthesis; L-proline biosynthesis; L-glutamate 5-semialdehyde from L-glutamate: step 2/2. In terms of biological role, catalyzes the NADPH-dependent reduction of L-glutamate 5-phosphate into L-glutamate 5-semialdehyde and phosphate. The product spontaneously undergoes cyclization to form 1-pyrroline-5-carboxylate. This chain is Gamma-glutamyl phosphate reductase, found in Actinobacillus pleuropneumoniae serotype 5b (strain L20).